An 81-amino-acid chain; its full sequence is Defensin-like protein 115 (81 aa).

The first 24 residues, 1 to 24, serve as a signal peptide directing secretion; it reads MAITKKMLVVFLLAFLFVTSSVHC. Intrachain disulfides connect Cys-40–Cys-78, Cys-46–Cys-69, Cys-54–Cys-76, and Cys-58–Cys-77.

The protein belongs to the DEFL family.

It localises to the secreted. The polypeptide is Defensin-like protein 115 (Arabidopsis thaliana (Mouse-ear cress)).